The sequence spans 325 residues: Putative aryl-alcohol dehydrogenase C750.01 (325 aa).

This sequence belongs to the aldo/keto reductase family. Aldo/keto reductase 2 subfamily.

This Schizosaccharomyces pombe (strain 972 / ATCC 24843) (Fission yeast) protein is Putative aryl-alcohol dehydrogenase C750.01.